Here is a 57-residue protein sequence, read N- to C-terminus: High light-inducible protein HliD (57 aa).

Positions 25–30 (EKLNGR) match the Chlorophyll-binding motif motif. The helical transmembrane segment at 25–46 (EKLNGRAAMVGFLLILVIEYFT) threads the bilayer.

Belongs to the Hlip family. In terms of assembly, probably forms dimers which bind 6 chlorophyll a and 2 beta-carotenoid molecules. Cofractionates in an approximately 50 kDa fraction of the thylakoid membrane with HliC. Does not associate with mature PSII. Purified in several chlorophyll- and carotenoid-containing complexes, including photosystem II (PSII) assembly intermediate complex RCII* (iD1, D1, D2, PsbE, PsbF, PsbI, Ycf39, Ycf48, HliC and HliD) and the Ycf39-Hlip complex (Ycf39, HliC, HliD and pigments).

It localises to the cellular thylakoid membrane. Its function is as follows. Involved in photosystem II (PSII) assembly and/or repair under high light stress. Required for binding of chlorophyll and carotenoids by the Ycf39-Hlip complex. The Ycf39-Hlip complex binds D1 at an early stage of PSII assembly along with Ycf48, ribosomes and ChlG, the last enzyme in chlorophyll biosynthesis; it may be involved in chlorophyll reuse and delivery to D1 in the initial stages of PSII assembly. Binds chlorophyll a and beta-carotenoid in a 3:1 stoichiometry in the presence and absence of Yfc39; in the Ycf39-HliC-HliD complex, HliD binds all the pigment. The Ycf39-Hlip complex efficiently quenches chlorophyll fluorescence, contributing to photoprotection. Deletion of 4 to 5 members of the Hlip family suggests the proteins are involved in regulation of chlorophyll biosynthesis, in stabilization of chlorophyll-binding proteins and/or in reuse of chlorophylls, and may regulate tetrapyrrole biosynthesis. Might bind chlorophyll and/or carotenoids in association with HliC (called the ScpBE pair). Functionally, the Hlips might regulate tetrapyrrole biosynthesis, maybe at the level of aminolevulinic acid synthesis and probably stabilize PSII assembly intermediates. This Synechocystis sp. (strain ATCC 27184 / PCC 6803 / Kazusa) protein is High light-inducible protein HliD (hliD).